We begin with the raw amino-acid sequence, 259 residues long: Dihydroorotate dehydrogenase B (NAD(+)), electron transfer subunit (259 aa).

The 101-residue stretch at 2–102 (MQKQNMIVVN…LGPLGHGFPV (101 aa)) folds into the FAD-binding FR-type domain. FAD is bound by residues 53–56 (RPIS), 70–72 (LYR), and 77–78 (GT). Residues cysteine 221, cysteine 226, cysteine 229, and cysteine 246 each contribute to the [2Fe-2S] cluster site.

This sequence belongs to the PyrK family. Heterotetramer of 2 PyrK and 2 PyrD type B subunits. [2Fe-2S] cluster serves as cofactor. FAD is required as a cofactor.

It participates in pyrimidine metabolism; UMP biosynthesis via de novo pathway; orotate from (S)-dihydroorotate (NAD(+) route): step 1/1. In terms of biological role, responsible for channeling the electrons from the oxidation of dihydroorotate from the FMN redox center in the PyrD type B subunit to the ultimate electron acceptor NAD(+). The sequence is that of Dihydroorotate dehydrogenase B (NAD(+)), electron transfer subunit from Bacillus cereus (strain Q1).